The chain runs to 835 residues: Bifunctional uridylyltransferase/uridylyl-removing enzyme (835 aa).

The tract at residues 1–316 is uridylyltransferase; it reads MTDEAEDSGP…GGKPVAERSP (316 aa). Residues 317 to 650 form a uridylyl-removing region; that stretch reads LAEGVVEQDG…SADGPEPLGV (334 aa). The 124-residue stretch at 431 to 554 folds into the HD domain; it reads VDRHLIETAV…DALATGPAAW (124 aa). The tract at residues 610–645 is disordered; sequence QTEPPADSAPAPSSPSSPSFPSPLSSPSSPSSADGP. Residues 621–630 show a composition bias toward pro residues; sequence PSSPSSPSFP. Positions 631–642 are enriched in low complexity; sequence SPLSSPSSPSSA. 2 ACT domains span residues 651 to 736 and 765 to 835; these read ELLI…LAER and VIEV…SLRT.

The protein belongs to the GlnD family. It depends on Mg(2+) as a cofactor.

It carries out the reaction [protein-PII]-L-tyrosine + UTP = [protein-PII]-uridylyl-L-tyrosine + diphosphate. The catalysed reaction is [protein-PII]-uridylyl-L-tyrosine + H2O = [protein-PII]-L-tyrosine + UMP + H(+). With respect to regulation, uridylyltransferase (UTase) activity is inhibited by glutamine, while glutamine activates uridylyl-removing (UR) activity. Modifies, by uridylylation and deuridylylation, the PII regulatory proteins (GlnB and homologs), in response to the nitrogen status of the cell that GlnD senses through the glutamine level. Under low glutamine levels, catalyzes the conversion of the PII proteins and UTP to PII-UMP and PPi, while under higher glutamine levels, GlnD hydrolyzes PII-UMP to PII and UMP (deuridylylation). Thus, controls uridylylation state and activity of the PII proteins, and plays an important role in the regulation of nitrogen assimilation and metabolism. This chain is Bifunctional uridylyltransferase/uridylyl-removing enzyme, found in Streptomyces coelicolor (strain ATCC BAA-471 / A3(2) / M145).